A 278-amino-acid polypeptide reads, in one-letter code: Large ribosomal subunit protein uL2 (278 aa).

Positions 212–221 are enriched in basic residues; the sequence is NRWLGKRPHN. Positions 212 to 278 are disordered; that stretch reads NRWLGKRPHN…ILSSRHNRKK (67 aa).

This sequence belongs to the universal ribosomal protein uL2 family. Part of the 50S ribosomal subunit. Forms a bridge to the 30S subunit in the 70S ribosome.

Functionally, one of the primary rRNA binding proteins. Required for association of the 30S and 50S subunits to form the 70S ribosome, for tRNA binding and peptide bond formation. It has been suggested to have peptidyltransferase activity; this is somewhat controversial. Makes several contacts with the 16S rRNA in the 70S ribosome. The protein is Large ribosomal subunit protein uL2 of Methylorubrum populi (strain ATCC BAA-705 / NCIMB 13946 / BJ001) (Methylobacterium populi).